The primary structure comprises 215 residues: Small ribosomal subunit protein eS1 (215 aa).

This sequence belongs to the eukaryotic ribosomal protein eS1 family.

This Thermoplasma volcanium (strain ATCC 51530 / DSM 4299 / JCM 9571 / NBRC 15438 / GSS1) protein is Small ribosomal subunit protein eS1.